The following is a 210-amino-acid chain: 7-carboxy-7-deazaguanine synthase (210 aa).

Residues 12–14 (LQG) and Arg-27 contribute to the substrate site. Positions 18 to 210 (QAGKAAVFCR…VQTHKYLGLP (193 aa)) constitute a Radical SAM core domain. [4Fe-4S] cluster is bound by residues Cys-31, Cys-46, and Cys-49. Residue Thr-51 participates in Mg(2+) binding. Thr-90 serves as a coordination point for substrate. S-adenosyl-L-methionine is bound by residues Gly-92, 133–135 (SPK), and 173–176 (QPMD). A substrate-binding site is contributed by Pro-210.

The protein belongs to the radical SAM superfamily. 7-carboxy-7-deazaguanine synthase family. In terms of assembly, homodimer. [4Fe-4S] cluster is required as a cofactor. The cofactor is S-adenosyl-L-methionine. Requires Mg(2+) as cofactor.

It catalyses the reaction 6-carboxy-5,6,7,8-tetrahydropterin + H(+) = 7-carboxy-7-deazaguanine + NH4(+). The protein operates within purine metabolism; 7-cyano-7-deazaguanine biosynthesis. Functionally, catalyzes the complex heterocyclic radical-mediated conversion of 6-carboxy-5,6,7,8-tetrahydropterin (CPH4) to 7-carboxy-7-deazaguanine (CDG), a step common to the biosynthetic pathways of all 7-deazapurine-containing compounds. The sequence is that of 7-carboxy-7-deazaguanine synthase from Caulobacter vibrioides (strain ATCC 19089 / CIP 103742 / CB 15) (Caulobacter crescentus).